The sequence spans 29 residues: Dermaseptin-H7 (29 aa).

The residue at position 29 (Leu29) is a Leucine amide.

The protein belongs to the frog skin active peptide (FSAP) family. Dermaseptin subfamily. In terms of tissue distribution, expressed by the skin glands.

It localises to the secreted. Has antibacterial activity against the Gram-negative bacterium E.coli and the Gram-positive bacterium S.aureus. Has antiprotozoal activity against L.amazonensis. Has antifungal activity. Has no hemolytic activity. This is Dermaseptin-H7 from Pithecopus hypochondrialis (Orange-legged leaf frog).